Reading from the N-terminus, the 898-residue chain is Alanine--tRNA ligase (898 aa).

4 residues coordinate Zn(2+): His589, His593, Cys693, and His697.

The protein belongs to the class-II aminoacyl-tRNA synthetase family. Requires Zn(2+) as cofactor.

The protein resides in the cytoplasm. The enzyme catalyses tRNA(Ala) + L-alanine + ATP = L-alanyl-tRNA(Ala) + AMP + diphosphate. Catalyzes the attachment of alanine to tRNA(Ala) in a two-step reaction: alanine is first activated by ATP to form Ala-AMP and then transferred to the acceptor end of tRNA(Ala). Also edits incorrectly charged Ser-tRNA(Ala) and Gly-tRNA(Ala) via its editing domain. This is Alanine--tRNA ligase from Methanothermobacter thermautotrophicus (strain ATCC 29096 / DSM 1053 / JCM 10044 / NBRC 100330 / Delta H) (Methanobacterium thermoautotrophicum).